A 161-amino-acid polypeptide reads, in one-letter code: Peptidyl-prolyl cis-trans isomerase-like 3 (161 aa).

Residue S2 is modified to N-acetylserine. Residues 2 to 154 form the PPIase cyclophilin-type domain; sequence SVTLHTDVGD…NDVHIKDITI (153 aa). R61 is modified (omega-N-methylarginine).

Belongs to the cyclophilin-type PPIase family. PPIL3 subfamily. In terms of assembly, identified in the spliceosome C complex.

The enzyme catalyses [protein]-peptidylproline (omega=180) = [protein]-peptidylproline (omega=0). In terms of biological role, PPIases accelerate the folding of proteins. It catalyzes the cis-trans isomerization of proline imidic peptide bonds in oligopeptides. May be involved in pre-mRNA splicing. In Mus musculus (Mouse), this protein is Peptidyl-prolyl cis-trans isomerase-like 3 (Ppil3).